We begin with the raw amino-acid sequence, 426 residues long: Histidine--tRNA ligase (426 aa).

It belongs to the class-II aminoacyl-tRNA synthetase family. Homodimer.

It localises to the cytoplasm. It carries out the reaction tRNA(His) + L-histidine + ATP = L-histidyl-tRNA(His) + AMP + diphosphate + H(+). The sequence is that of Histidine--tRNA ligase from Streptococcus pyogenes serotype M1.